The sequence spans 184 residues: Ribosome maturation factor RimM (184 aa).

Positions 101–180 constitute a PRC barrel domain; the sequence is DGEFFYCDLV…KITTNNAKTL (80 aa).

This sequence belongs to the RimM family. In terms of assembly, binds ribosomal protein uS19.

The protein localises to the cytoplasm. Functionally, an accessory protein needed during the final step in the assembly of 30S ribosomal subunit, possibly for assembly of the head region. Essential for efficient processing of 16S rRNA. May be needed both before and after RbfA during the maturation of 16S rRNA. It has affinity for free ribosomal 30S subunits but not for 70S ribosomes. The polypeptide is Ribosome maturation factor RimM (Helicobacter pylori (strain Shi470)).